We begin with the raw amino-acid sequence, 553 residues long: Effector protein HopAB2 (553 aa).

Disordered stretches follow at residues 1 to 123 (MAGI…APRR), 198 to 227 (AVHQ…GSSQ), and 239 to 275 (APNQ…AAMR). The interval 1 to 308 (MAGINRAGPS…LRTALERHVM (308 aa)) is host recognition; Pto interaction. Over residues 24–39 (SGQAHGSGSGASSSNS) the composition is skewed to low complexity. The span at 47–60 (SNTPPSNAPAPPPT) shows a compositional bias: pro residues. Low complexity predominate over residues 217 to 227 (SPAASSSGSSQ). Over residues 242 to 255 (QGRSSNTAASQTPV) the composition is skewed to polar residues. Residues 309–553 (QRLPIPLDIG…IAKYAFRIVP (245 aa)) are E3 ubiquitin-protein ligase. The Interaction with Pto-kinase signature appears at 325–328 (GINP). Residues 361–380 (APRPAVPVAPATASRRPDGT) are disordered. The tract at residues 512–529 (KDLAFMDMKKLAQFLAGK) is required for E3 ubiquitin-protein ligase and anti-PCD activities and pathogenesis.

This sequence belongs to the HopAB family. Interacts physically with plant cell Pto. Auto-ubiquitinated.

It localises to the secreted. In terms of biological role, effector protein involved in gene-for-gene resistance in tomato plants. It is recognized by the host Pto resistance protein and elicits Pto and Prf-dependent hypersensitive response (HR) and programmed cell death (PCD), resulting in host immunity. In susceptible plants, acts as a virulence factor by suppressing PCD and HR-based plant immunity. This function requires its E3 ubiquitin ligase activity probably by recruiting E2 enzymes and transferring ubiquitin molecules to cellular proteins involved in regulation of PCD and targeting them for degradation. Also, induces expression of host genes involved in ethylene biosynthesis and signaling, in particular ACO1 and ACO2, encoding the ethylene-forming enzyme ACC oxidase. The chain is Effector protein HopAB2 (hopAB2) from Pseudomonas syringae pv. tomato (strain ATCC BAA-871 / DC3000).